The sequence spans 615 residues: Elongation factor 4 (615 aa).

One can recognise a tr-type G domain in the interval 14 to 200; that stretch reads QQIRNFCIIA…KVAELIPAPT (187 aa). GTP contacts are provided by residues 26–31 and 147–150; these read DHGKST and NKID.

This sequence belongs to the TRAFAC class translation factor GTPase superfamily. Classic translation factor GTPase family. LepA subfamily.

The protein resides in the cell membrane. The catalysed reaction is GTP + H2O = GDP + phosphate + H(+). Required for accurate and efficient protein synthesis under certain stress conditions. May act as a fidelity factor of the translation reaction, by catalyzing a one-codon backward translocation of tRNAs on improperly translocated ribosomes. Back-translocation proceeds from a post-translocation (POST) complex to a pre-translocation (PRE) complex, thus giving elongation factor G a second chance to translocate the tRNAs correctly. Binds to ribosomes in a GTP-dependent manner. The polypeptide is Elongation factor 4 (Corynebacterium diphtheriae (strain ATCC 700971 / NCTC 13129 / Biotype gravis)).